We begin with the raw amino-acid sequence, 479 residues long: FNRXSPGLQGVSSVPLRTYADQPIDADVTVIGSGPGGYVAAIKAAQLGFKTVCIEKNETLGGTCLNVGCIPSKALLNNSHYYHLAHGKDFASRGIELSEVRLNLEKMMEQKSSAVKALTGGIAHLFKQNKVVHVNGFGNITGKNQVTATKADGSSQVIGTKNILIATGSEVTPFPGITIDEDTIVSSTGALSLKKVPEKLVVIGAGVIGVELGSVWQRLGAEVTAVEFLGHVGGIGIDMEISKKFQRILQKQGFKFKLNPKVPGATKRSDGKIDVSVEAAPGGKAEVIPCDVLLVCIGRRPFTQNLGLEELGIELDPRGRIPVNTRFQTKIPNIYAIGDVVAGPMLAHKAEDEGIICVEGMAGGAVHIDYNCVPSVIYTHPEVAWVGKSEEQLKEEGIEYKVGKFPFAANSRAKTNADTDGMVKILGQKSTDRVLGAHILGPGAGEMVNEAALALEYGASCEDIARVCHAHPTLSEAFR.

The N-terminal 19 residues, Phe1–Tyr19, are a transit peptide targeting the mitochondrion. The residue at position 50 (Lys50) is an N6-acetyllysine; alternate. Lys50 is subject to N6-succinyllysine; alternate. FAD-binding positions include Glu55–Cys64 and Lys73. A disulfide bridge connects residues Cys64 and Cys69. Residues Lys88, Lys106, Lys116, and Lys127 each carry the N6-acetyllysine; alternate modification. An N6-succinyllysine; alternate mark is found at Lys88, Lys106, Lys116, and Lys127. An FAD-binding site is contributed by Gly138. 2 positions are modified to N6-succinyllysine: Lys143 and Lys150. Thr167–Ser169 is an FAD binding site. NAD(+) contacts are provided by residues Gly204–Glu211 and Glu227. 2 positions are modified to N6-succinyllysine: Lys257 and Lys261. Residue Val262 participates in NAD(+) binding. Phosphoserine is present on Ser269. Residue Gly298 participates in NAD(+) binding. Residue Lys330 is modified to N6-acetyllysine. FAD is bound by residues Asp339 and Met345–His348. Lys394 bears the N6-acetyllysine; alternate mark. Lys394 carries the N6-succinyllysine; alternate modification. N6-acetyllysine is present on residues Lys401 and Lys404. An N6-succinyllysine modification is found at Lys414. The active-site Proton acceptor is His471.

Belongs to the class-I pyridine nucleotide-disulfide oxidoreductase family. As to quaternary structure, homodimer. Part of the multimeric pyruvate dehydrogenase complex that contains multiple copies of pyruvate dehydrogenase (subunits PDHA (PDHA1 or PDHA2) and PDHB, E1), dihydrolipoamide acetyltransferase (DLAT, E2) and lipoamide dehydrogenase (DLD, E3). These subunits are bound to an inner core composed of about 48 DLAT and 12 PDHX molecules (by non covalent bonds). The 2-oxoglutarate dehydrogenase complex is composed of OGDH (2-oxoglutarate dehydrogenase; E1), DLST (dihydrolipoamide succinyltransferase; E2) and DLD (dihydrolipoamide dehydrogenase; E3). It contains multiple copies of the three enzymatic components (E1, E2 and E3). In the nucleus, the 2-oxoglutarate dehydrogenase complex associates with KAT2A. Interacts with PDHX. The cofactor is FAD. Post-translationally, tyrosine phosphorylated. In terms of tissue distribution, expressed in testis (at protein level).

It is found in the mitochondrion matrix. The protein resides in the nucleus. Its subcellular location is the cell projection. The protein localises to the cilium. It localises to the flagellum. It is found in the cytoplasmic vesicle. The protein resides in the secretory vesicle. Its subcellular location is the acrosome. It carries out the reaction N(6)-[(R)-dihydrolipoyl]-L-lysyl-[protein] + NAD(+) = N(6)-[(R)-lipoyl]-L-lysyl-[protein] + NADH + H(+). Its function is as follows. Lipoamide dehydrogenase is a component of the glycine cleavage system as well as an E3 component of three alpha-ketoacid dehydrogenase complexes (pyruvate-, alpha-ketoglutarate-, and branched-chain amino acid-dehydrogenase complex). The 2-oxoglutarate dehydrogenase complex is mainly active in the mitochondrion. A fraction of the 2-oxoglutarate dehydrogenase complex also localizes in the nucleus and is required for lysine succinylation of histones: associates with KAT2A on chromatin and provides succinyl-CoA to histone succinyltransferase KAT2A. In monomeric form may have additional moonlighting function as serine protease. Involved in the hyperactivation of spermatazoa during capacitation and in the spermatazoal acrosome reaction. The polypeptide is Dihydrolipoyl dehydrogenase, mitochondrial (DLD) (Mesocricetus auratus (Golden hamster)).